The sequence spans 146 residues: Hemoglobin subunit beta (146 aa).

Valine 1 bears the N-acetylvaline mark. One can recognise a Globin domain in the interval 2-146; it reads HLTADEKSAV…VATALGHKYH (145 aa). Phosphothreonine is present on threonine 12. At serine 44 the chain carries Phosphoserine. Position 59 is an N6-acetyllysine (lysine 59). Residue histidine 63 participates in heme b binding. Position 82 is an N6-acetyllysine (lysine 82). Heme b is bound at residue histidine 92. Cysteine 93 bears the S-nitrosocysteine mark. The residue at position 144 (lysine 144) is an N6-acetyllysine.

Belongs to the globin family. In terms of assembly, heterotetramer of two alpha chains and two beta chains. Red blood cells.

In terms of biological role, involved in oxygen transport from the lung to the various peripheral tissues. The sequence is that of Hemoglobin subunit beta (HBB) from Antrozous pallidus (Pallid bat).